The following is a 253-amino-acid chain: Flagellar brake protein YcgR (253 aa).

The region spanning 120 to 239 (QRRDFYRFAT…NEGLINRYVY (120 aa)) is the PilZ domain.

Belongs to the YcgR family. Monomer. Interacts with the flagellar basal bodies.

Its subcellular location is the bacterial flagellum basal body. Functionally, acts as a flagellar brake, regulating swimming and swarming in a bis-(3'-5') cyclic diguanylic acid (c-di-GMP)-dependent manner. Binds 1 c-di-GMP dimer per subunit. Increasing levels of c-di-GMP lead to decreased motility. The chain is Flagellar brake protein YcgR from Methylotenera mobilis (strain JLW8 / ATCC BAA-1282 / DSM 17540).